A 227-amino-acid chain; its full sequence is Heptaprenylglyceryl phosphate synthase (227 aa).

Lys13 lines the sn-glycerol 1-phosphate pocket. Mg(2+)-binding residues include Asp15 and Thr41. Sn-glycerol 1-phosphate is bound by residues 159–164, Gly189, and 209–210; these read YLEYSG and GN.

The protein belongs to the GGGP/HepGP synthase family. Group I subfamily. Homodimer. It depends on Mg(2+) as a cofactor.

The catalysed reaction is sn-glycerol 1-phosphate + all-trans-heptaprenyl diphosphate = 3-heptaprenyl-sn-glycero-1-phosphate + diphosphate. It functions in the pathway membrane lipid metabolism; glycerophospholipid metabolism. Prenyltransferase that catalyzes in vivo the transfer of the heptaprenyl moiety of heptaprenyl pyrophosphate (HepPP; 35 carbon atoms) to the C3 hydroxyl of sn-glycerol-1-phosphate (G1P), producing heptaprenylglyceryl phosphate (HepGP). This reaction is an ether-bond-formation step in the biosynthesis of archaea-type G1P-based membrane lipids found in Bacillales. This chain is Heptaprenylglyceryl phosphate synthase, found in Exiguobacterium sibiricum (strain DSM 17290 / CCUG 55495 / CIP 109462 / JCM 13490 / 255-15).